Consider the following 154-residue polypeptide: Troponin C, isoform 1 (154 aa).

4 EF-hand domains span residues Glu-8–Gln-43, Leu-44–Glu-79, Ala-84–Lys-119, and Leu-120–Asp-154. Ca(2+)-binding residues include Asp-57, Asp-59, Ser-61, Gln-63, and Glu-68. The Ca(2+) site is built by Asp-133, Asp-135, Ser-137, Thr-139, and Glu-144.

It belongs to the troponin C family. In terms of tissue distribution, present only in adult muscles.

This chain is Troponin C, isoform 1 (TpnC41C), found in Drosophila melanogaster (Fruit fly).